The chain runs to 329 residues: Homeobox protein ceh-40 (329 aa).

The PBC domain occupies Glu-3–Asp-186. The segment at Asp-10 to Leu-90 is PBC-A. A PBC-B region spans residues Ile-93–Asp-186. Positions Ala-187–Met-249 form a DNA-binding region, homeobox; TALE-type. The disordered stretch occupies residues Thr-248 to Tyr-275. Basic and acidic residues predominate over residues Ala-250–Pro-266.

The protein belongs to the TALE/PBX homeobox family. In terms of tissue distribution, expressed in head dopaminergic neurons.

The protein resides in the nucleus. In terms of biological role, plays a role in regulating gene expression in dopaminergic neurons, acting redundantly with homeobox protein ceh-20 in head neurons. May activate dopamine pathway genes in concert with ETS domain-containing protein ast-1, and homeobox proteins ceh-43 and ceh-20. The sequence is that of Homeobox protein ceh-40 (ceh-40) from Caenorhabditis elegans.